A 116-amino-acid chain; its full sequence is Large ribosomal subunit protein bL17 (116 aa).

It belongs to the bacterial ribosomal protein bL17 family. Part of the 50S ribosomal subunit. Contacts protein L32.

The protein is Large ribosomal subunit protein bL17 of Parasynechococcus marenigrum (strain WH8102).